A 166-amino-acid polypeptide reads, in one-letter code: Putative 4-hydroxy-4-methyl-2-oxoglutarate aldolase 1 (166 aa).

At A2 the chain carries N-acetylalanine. Substrate contacts are provided by residues 81–84 (GGNP) and R103. An a divalent metal cation-binding site is contributed by D104.

The protein belongs to the class II aldolase/RraA-like family. In terms of assembly, homotrimer. A divalent metal cation serves as cofactor.

The enzyme catalyses 4-hydroxy-4-methyl-2-oxoglutarate = 2 pyruvate. The catalysed reaction is oxaloacetate + H(+) = pyruvate + CO2. Functionally, catalyzes the aldol cleavage of 4-hydroxy-4-methyl-2-oxoglutarate (HMG) into 2 molecules of pyruvate. Also contains a secondary oxaloacetate (OAA) decarboxylase activity due to the common pyruvate enolate transition state formed following C-C bond cleavage in the retro-aldol and decarboxylation reactions. The sequence is that of Putative 4-hydroxy-4-methyl-2-oxoglutarate aldolase 1 from Arabidopsis thaliana (Mouse-ear cress).